The primary structure comprises 308 residues: Ornithine carbamoyltransferase (308 aa).

Residues 56-59 (STRT), Gln-83, Arg-107, and 134-137 (HPCQ) each bind carbamoyl phosphate. L-ornithine contacts are provided by residues Asn-165, Asp-225, and 229-230 (SM). Carbamoyl phosphate contacts are provided by residues 266 to 267 (CL) and Arg-294.

It belongs to the aspartate/ornithine carbamoyltransferase superfamily. OTCase family.

It localises to the cytoplasm. It carries out the reaction carbamoyl phosphate + L-ornithine = L-citrulline + phosphate + H(+). It functions in the pathway amino-acid biosynthesis; L-arginine biosynthesis; L-arginine from L-ornithine and carbamoyl phosphate: step 1/3. Its function is as follows. Reversibly catalyzes the transfer of the carbamoyl group from carbamoyl phosphate (CP) to the N(epsilon) atom of ornithine (ORN) to produce L-citrulline. This Ruegeria pomeroyi (strain ATCC 700808 / DSM 15171 / DSS-3) (Silicibacter pomeroyi) protein is Ornithine carbamoyltransferase.